The following is a 317-amino-acid chain: Melanocyte-stimulating hormone receptor (317 aa).

The Extracellular segment spans residues 1–37 (MPMQGAQRKLLGSLNSTPTATSNLGLAANHTGAPCLE). N-linked (GlcNAc...) asparagine glycosylation occurs at Asn-29. The chain crosses the membrane as a helical span at residues 38–63 (VSIPDGLFLSLGLVSLVENVLVVAAI). Residues 64–72 (AKNRNLHSS) lie on the Cytoplasmic side of the membrane. The helical transmembrane segment at 73-93 (MYCFICCLALSDLLVSGSNML) threads the bilayer. At 94-118 (ETAVILLLEAGALATRTSAVQRLHN) the chain is on the extracellular side. The helical transmembrane segment at 119 to 140 (TIDVLTCSSMLCSLCFLGAIAV) threads the bilayer. Topologically, residues 141–163 (DRYISIFYALRYHSIVTLPRTQR) are cytoplasmic. Residues 164–183 (VIAAIWVASVLSSTLFITYY) form a helical membrane-spanning segment. Over 184–191 (DHAAVLLC) the chain is Extracellular. A helical membrane pass occupies residues 192–211 (LVVFFLAMLVLMAVLYVHML). Residues 212–240 (ARACQHAHGIIRLHKRQSPAHQGFGLRGA) are Cytoplasmic-facing. Residues 241-266 (ATLTILLGIFFLCWGPFFLHLTLVVF) form a helical membrane-spanning segment. Topologically, residues 267-279 (CPQHLTCSCIFKN) are extracellular. The chain crosses the membrane as a helical span at residues 280–300 (FKVFLTLIICNTIIDPLIYAF). Residues 301–317 (RSQELRRTLKEVLLCSW) are Cytoplasmic-facing. Cys-315 carries the S-palmitoyl cysteine lipid modification.

Belongs to the G-protein coupled receptor 1 family. Interacts with MGRN1, but does not undergo MGRN1-mediated ubiquitination; this interaction competes with GNAS-binding and thus inhibits agonist-induced cAMP production. Interacts with OPN3; the interaction results in a decrease in MC1R-mediated cAMP signaling and ultimately a decrease in melanin production in melanocytes.

It localises to the cell membrane. In terms of biological role, receptor for MSH (alpha, beta and gamma) and ACTH. The activity of this receptor is mediated by G proteins which activate adenylate cyclase. Mediates melanogenesis, the production of eumelanin (black/brown) and phaeomelanin (red/yellow), via regulation of cAMP signaling in melanocytes. This is Melanocyte-stimulating hormone receptor (MC1R) from Saguinus imperator (Emperor tamarin).